The following is a 373-amino-acid chain: Chemerin-like receptor 1 (373 aa).

At Met1–Ile41 the chain is on the extracellular side. Residue Asn9 is glycosylated (N-linked (GlcNAc...) asparagine). The helical transmembrane segment at Phe42–Ile64 threads the bilayer. Residues Ala65 to Met75 lie on the Cytoplasmic side of the membrane. A helical transmembrane segment spans residues Val76 to Thr97. The Extracellular portion of the chain corresponds to Tyr98–Ile114. Cys112 and Cys189 are disulfide-bonded. A helical transmembrane segment spans residues Ser115–Ser135. Topologically, residues Asp136–Arg154 are cytoplasmic. A helical membrane pass occupies residues Leu155–Val176. Residues Phe177–Arg224 are Extracellular-facing. Asn192 carries an N-linked (GlcNAc...) asparagine glycan. The helical transmembrane segment at Phe225 to Cys245 threads the bilayer. At Lys246–Ile261 the chain is on the cytoplasmic side. Residues Ile262–Leu282 traverse the membrane as a helical segment. Over Glu283–Leu300 the chain is Extracellular. Residues Ala301–Gly320 traverse the membrane as a helical segment. At Gln321 to Leu373 the chain is on the cytoplasmic side. Ser339 carries the phosphoserine modification. The segment at Asp341 to Leu373 is disordered. Thr342 is subject to Phosphothreonine. Residues His344–Thr363 show a composition bias toward polar residues. Phosphoserine occurs at positions 349, 352, and 358. A compositionally biased stretch (basic and acidic residues) spans Ser364 to Leu373.

The protein belongs to the chemokine-like receptor (CMKLR) family. In terms of tissue distribution, prominently expressed in developing osseous and cartilaginous tissue. Also found in adult parathyroid glands. Expressed in cardiovascular system, brain, kidney, gastrointestinal tissues and myeloid tissues. Expressed in a broad array of tissues associated with hematopoietic and immune function including, spleen, thymus, appendix, lymph node, bone marrow and fetal liver. Among leukocyte populations abundant expression in monocyte-derived macrophage and immature dendritic cells (DCs). High expression in blood monocytes and low levels in polymorphonuclear cells and T-cells. Expressed on endothelial cells. Highly expressed in differentiating adipocytes.

The protein localises to the cell membrane. Functionally, receptor for the chemoattractant adipokine chemerin/RARRES2 and for the omega-3 fatty acid derived molecule resolvin E1. Interaction with RARRES2 initiates activation of G proteins G(i)/G(o) and beta-arrestin pathways inducing cellular responses via second messenger pathways such as intracellular calcium mobilization, phosphorylation of MAP kinases MAPK1/MAPK3 (ERK1/2), TYRO3, MAPK14/P38MAPK and PI3K leading to multifunctional effects, like reduction of immune responses, enhancing of adipogenesis and angionesis. Resolvin E1 down-regulates cytokine production in macrophages by reducing the activation of MAPK1/3 (ERK1/2) and NF-kappa-B. Positively regulates adipogenesis and adipocyte metabolism. In terms of biological role, (Microbial infection) Acts as a coreceptor for several SIV strains (SIVMAC316, SIVMAC239, SIVMACL7E-FR and SIVSM62A), as well as a primary HIV-1 strain (92UG024-2). The chain is Chemerin-like receptor 1 from Homo sapiens (Human).